The chain runs to 583 residues: NudC domain-containing protein 1 (583 aa).

A Phosphoserine modification is found at Ser-8. In terms of domain architecture, CS spans 273–361 (IKEPLYYWQQ…NEGLTWPELV (89 aa)). Ser-388 bears the Phosphoserine mark.

Isoform 1 is specifically expressed in leukemias and a variety of solid tumor cell lines and is also detected in testis and heart. Isoform 2 is predominantly expressed in testis and weakly expressed in tumor cells.

The protein localises to the cytoplasm. Its subcellular location is the nucleus. The sequence is that of NudC domain-containing protein 1 from Homo sapiens (Human).